The primary structure comprises 24 residues: Coenzyme PQQ synthesis protein A (24 aa).

The segment at residues 16–20 (EITMY) is a cross-link (pyrroloquinoline quinone (Glu-Tyr)).

Belongs to the PqqA family.

It functions in the pathway cofactor biosynthesis; pyrroloquinoline quinone biosynthesis. Functionally, required for coenzyme pyrroloquinoline quinone (PQQ) biosynthesis. PQQ is probably formed by cross-linking a specific glutamate to a specific tyrosine residue and excising these residues from the peptide. In Variovorax paradoxus (strain S110), this protein is Coenzyme PQQ synthesis protein A.